The following is a 179-amino-acid chain: Probable chorismate pyruvate-lyase (179 aa).

Residues Arg-82, Leu-120, and Glu-165 each coordinate substrate.

It belongs to the UbiC family.

The protein resides in the cytoplasm. It catalyses the reaction chorismate = 4-hydroxybenzoate + pyruvate. The protein operates within cofactor biosynthesis; ubiquinone biosynthesis. Its function is as follows. Removes the pyruvyl group from chorismate, with concomitant aromatization of the ring, to provide 4-hydroxybenzoate (4HB) for the ubiquinone pathway. The sequence is that of Probable chorismate pyruvate-lyase from Vibrio vulnificus (strain YJ016).